Consider the following 235-residue polypeptide: Enolase-phosphatase E1 (235 aa).

It belongs to the HAD-like hydrolase superfamily. MasA/MtnC family. As to quaternary structure, monomer. Mg(2+) serves as cofactor.

It catalyses the reaction 5-methylsulfanyl-2,3-dioxopentyl phosphate + H2O = 1,2-dihydroxy-5-(methylsulfanyl)pent-1-en-3-one + phosphate. It participates in amino-acid biosynthesis; L-methionine biosynthesis via salvage pathway; L-methionine from S-methyl-5-thio-alpha-D-ribose 1-phosphate: step 3/6. It functions in the pathway amino-acid biosynthesis; L-methionine biosynthesis via salvage pathway; L-methionine from S-methyl-5-thio-alpha-D-ribose 1-phosphate: step 4/6. In terms of biological role, bifunctional enzyme that catalyzes the enolization of 2,3-diketo-5-methylthiopentyl-1-phosphate (DK-MTP-1-P) into the intermediate 2-hydroxy-3-keto-5-methylthiopentenyl-1-phosphate (HK-MTPenyl-1-P), which is then dephosphorylated to form the acireductone 1,2-dihydroxy-3-keto-5-methylthiopentene (DHK-MTPene). The sequence is that of Enolase-phosphatase E1 from Parvibaculum lavamentivorans (strain DS-1 / DSM 13023 / NCIMB 13966).